The chain runs to 251 residues: MSGHSKWATTKHKKAAIDAKRGKLFAKLIKNIEIAARLGGGDPDGNPSLYDAIYKAKKASMPADNIARAVKRGAGDEDGAANYEDIVYEGYAPAGVGLIIECLTDNRNRAAAEVRSTLTKGNGSLATSGSVSFNFERKGQIVVPSEGVDFDKLFETAAEAGAEDVTDDDEVYTVITGPSDLFTVRKALQDAGFDYDSADQVMQPKNEVELSLEDARKVSKLIDNLDDLDDVQNIYSNWTASDEVMAQLDEE.

Belongs to the TACO1 family.

It is found in the cytoplasm. This Bifidobacterium longum subsp. infantis (strain ATCC 15697 / DSM 20088 / JCM 1222 / NCTC 11817 / S12) protein is Probable transcriptional regulatory protein Blon_1155/BLIJ_1182.